The following is a 453-amino-acid chain: Macrophage scavenger receptor types I and II (453 aa).

Residues 1–50 (MAQWDDFPDQQEDTDSCTESVKFDARSVTALLPPHPKNGPTLQERMKSYK) are Cytoplasmic-facing. The residue at position 27 (S27) is a Phosphoserine. A helical; Signal-anchor for type II membrane protein membrane pass occupies residues 51 to 76 (TALITLYLIVFVVLVPIIGIVAAQLL). Residues 77–108 (KWETKNCTVGSVNADISPSPEGKGNGSEDEMR) are spacer. Residues 77-453 (KWETKNCTVG…DEDAGVTCTT (377 aa)) lie on the Extracellular side of the membrane. Residues N82, N101, N142, N183, N220, N248, and N266 are each glycosylated (N-linked (GlcNAc...) asparagine). The stretch at 194–255 (ETLNGRVQEN…LNNITNDLRL (62 aa)) forms a coiled coil. Disordered stretches follow at residues 267–295 (ITLL…PGFP) and 313–349 (PGVR…QRQS). In terms of domain architecture, Collagen-like spans 272-343 (GPPGPPGEKG…KGQKGEKGSG (72 aa)). Residues 352–452 (VRLVGGSGPH…HDEDAGVTCT (101 aa)) form the SRCR domain. Disulfide bonds link C377–C441, C390–C451, and C421–C431.

As to quaternary structure, homotrimer. Interacts with MYO18A.

It is found in the membrane. Its function is as follows. Membrane glycoproteins implicated in the pathologic deposition of cholesterol in arterial walls during atherogenesis. Two types of receptor subunits exist. These receptors mediate the endocytosis of a diverse group of macromolecules, including modified low density lipoproteins (LDL). The sequence is that of Macrophage scavenger receptor types I and II (MSR1) from Bos taurus (Bovine).